The chain runs to 304 residues: Ubiquitin thioesterase OTU1 (304 aa).

The tract at residues 5–83 (RCKTREGTQL…IVEEDKSKLR (79 aa)) is UBX-like. The region spanning 105-230 (IVRRVVPADN…GIHYDPLQRQ (126 aa)) is the OTU domain. Residues 110 to 116 (VPADNSC) are cys-loop. Asp113 is a catalytic residue. Catalysis depends on Cys116, which acts as the Nucleophile. A variable-loop region spans residues 169-179 (IRREDTWGGAI). Positions 219–223 (YDGIH) are his-loop. Ile222 provides a ligand contact to substrate. His223 is an active-site residue. An S2 site region spans residues 247–252 (DEALVQ). A C2H2-type zinc finger spans residues 274–298 (LRCMACQKGLTGQSAARDHAKETGH). Residue His298 is part of the active site.

The protein localises to the cytoplasm. The catalysed reaction is Thiol-dependent hydrolysis of ester, thioester, amide, peptide and isopeptide bonds formed by the C-terminal Gly of ubiquitin (a 76-residue protein attached to proteins as an intracellular targeting signal).. Its function is as follows. Hydrolase that can remove conjugated ubiquitin from proteins and participates in endoplasmic reticulum-associated degradation (ERAD) for misfolded lumenal proteins. May act by triming the ubiquitin chain on the associated substrate to facilitate their threading through the VCP/p97 pore. Ubiquitin moieties on substrates may present a steric impediment to the threading process when the substrate is transferred to the VCP pore and threaded through VCP's axial channel. Mediates deubiquitination of 'Lys-27'-, 'Lys-29'- and 'Lys-33'-linked polyubiquitin chains. Also able to hydrolyze 'Lys-11'-linked ubiquitin chains. Cleaves both polyubiquitin and di-ubiquitin. This chain is Ubiquitin thioesterase OTU1 (yod1), found in Xenopus laevis (African clawed frog).